We begin with the raw amino-acid sequence, 281 residues long: 3-methyl-2-oxobutanoate hydroxymethyltransferase (281 aa).

Positions 44 and 83 each coordinate Mg(2+). 3-methyl-2-oxobutanoate contacts are provided by residues aspartate 44 to serine 45, aspartate 83, and lysine 112. Glutamate 114 lines the Mg(2+) pocket. Glutamate 180 functions as the Proton acceptor in the catalytic mechanism. The segment at arginine 251–glutamate 281 is disordered.

Belongs to the PanB family. In terms of assembly, homodecamer; pentamer of dimers. It depends on Mg(2+) as a cofactor.

It localises to the cytoplasm. The catalysed reaction is 3-methyl-2-oxobutanoate + (6R)-5,10-methylene-5,6,7,8-tetrahydrofolate + H2O = 2-dehydropantoate + (6S)-5,6,7,8-tetrahydrofolate. It functions in the pathway cofactor biosynthesis; (R)-pantothenate biosynthesis; (R)-pantoate from 3-methyl-2-oxobutanoate: step 1/2. In terms of biological role, catalyzes the reversible reaction in which hydroxymethyl group from 5,10-methylenetetrahydrofolate is transferred onto alpha-ketoisovalerate to form ketopantoate. In Chloroflexus aurantiacus (strain ATCC 29364 / DSM 637 / Y-400-fl), this protein is 3-methyl-2-oxobutanoate hydroxymethyltransferase.